The sequence spans 373 residues: GTPase Obg (373 aa).

The region spanning 1-158 (MFVDSVELLI…KQVRLEMKLI (158 aa)) is the Obg domain. The tract at residues 62 to 83 (NHIKAENGRPGEGRKKYGRKGQ) is disordered. Basic and acidic residues predominate over residues 64–76 (IKAENGRPGEGRK). Residues 159 to 362 (ADVGLVGYPN…LRYALGDFVK (204 aa)) form the OBG-type G domain. Residues 165-172 (GYPNVGKS), 190-194 (FTTLT), 212-215 (DIPG), 280-283 (TKID), and 343-345 (SSV) each bind GTP. Ser172 and Thr192 together coordinate Mg(2+).

This sequence belongs to the TRAFAC class OBG-HflX-like GTPase superfamily. OBG GTPase family. As to quaternary structure, monomer. Requires Mg(2+) as cofactor.

Its subcellular location is the cytoplasm. In terms of biological role, an essential GTPase which binds GTP, GDP and possibly (p)ppGpp with moderate affinity, with high nucleotide exchange rates and a fairly low GTP hydrolysis rate. Plays a role in control of the cell cycle, stress response, ribosome biogenesis and in those bacteria that undergo differentiation, in morphogenesis control. The sequence is that of GTPase Obg from Sulfurovum sp. (strain NBC37-1).